Here is a 178-residue protein sequence, read N- to C-terminus: ATP-dependent protease subunit HslV (178 aa).

Residue Thr-7 is part of the active site. The Na(+) site is built by Gly-162, Cys-165, and Thr-168.

It belongs to the peptidase T1B family. HslV subfamily. In terms of assembly, a double ring-shaped homohexamer of HslV is capped on each side by a ring-shaped HslU homohexamer. The assembly of the HslU/HslV complex is dependent on binding of ATP.

Its subcellular location is the cytoplasm. The catalysed reaction is ATP-dependent cleavage of peptide bonds with broad specificity.. Its activity is regulated as follows. Allosterically activated by HslU binding. Its function is as follows. Protease subunit of a proteasome-like degradation complex believed to be a general protein degrading machinery. This chain is ATP-dependent protease subunit HslV, found in Ralstonia nicotianae (strain ATCC BAA-1114 / GMI1000) (Ralstonia solanacearum).